Here is a 571-residue protein sequence, read N- to C-terminus: Urease subunit alpha (571 aa).

The region spanning 134–571 (GAIDTHIHFI…LPMAQRYFLF (438 aa)) is the Urease domain. 3 residues coordinate Ni(2+): His-139, His-141, and Lys-222. Position 222 is an N6-carboxylysine (Lys-222). Residue His-224 participates in substrate binding. Ni(2+) is bound by residues His-251 and His-277. Residue His-325 is the Proton donor of the active site. Asp-365 contacts Ni(2+).

Belongs to the metallo-dependent hydrolases superfamily. Urease alpha subunit family. In terms of assembly, heterotrimer of UreA (gamma), UreB (beta) and UreC (alpha) subunits. Three heterotrimers associate to form the active enzyme. It depends on Ni cation as a cofactor. Carboxylation allows a single lysine to coordinate two nickel ions.

It localises to the cytoplasm. It catalyses the reaction urea + 2 H2O + H(+) = hydrogencarbonate + 2 NH4(+). It functions in the pathway nitrogen metabolism; urea degradation; CO(2) and NH(3) from urea (urease route): step 1/1. The protein is Urease subunit alpha of Bordetella pertussis (strain Tohama I / ATCC BAA-589 / NCTC 13251).